The primary structure comprises 51 residues: MAAHKSFRIKQKLAKKLKQNRSVPQWVRLRTGNTIRYNAKRRHWRRTKLKL.

It belongs to the eukaryotic ribosomal protein eL39 family.

The chain is Large ribosomal subunit protein eL39 (RpL39) from Drosophila melanogaster (Fruit fly).